The primary structure comprises 103 residues: Viscotoxin-B (103 aa).

A signal peptide spans 1-6; sequence FRNVES. 3 cysteine pairs are disulfide-bonded: Cys9-Cys46, Cys10-Cys38, and Cys22-Cys32. A propeptide spans 53–103 (acidic domain); that stretch reads FYCTLGCQSSKCASITTPPNSEVDAEAVRCKAACSNLCDFGVTTNQEIQDD.

Belongs to the plant thionin (TC 1.C.44) family.

Its subcellular location is the secreted. Thionins are small plant proteins which are toxic to animal cells. They seem to exert their toxic effect at the level of the cell membrane. Their precise function is not known. This Viscum album (European mistletoe) protein is Viscotoxin-B (THI2.2).